The primary structure comprises 779 residues: Abnormal cell migration protein 10 (779 aa).

Residues 78–97 (NELEADTEEDIAETADDEES) show a composition bias toward acidic residues. Disordered regions lie at residues 78 to 105 (NELE…EKTE), 189 to 217 (SSSR…PQQP), and 242 to 302 (AASS…NAEE). Residues 189 to 200 (SSSRENVKSIST) show a composition bias toward polar residues. Low complexity predominate over residues 242-254 (AASSCSSPDGDSA). Residues 256 to 293 (GDSSSTESSNNRCRNSAFSSNDSCRDSLNTPSPTQVSP) are compositionally biased toward polar residues. In terms of domain architecture, Ras-associating spans 317–407 (EAKVTKIFVK…NKLYFMRRPD (91 aa)). In terms of domain architecture, PH spans 456–566 (PPEMEGFLYL…WLVALRIAKN (111 aa)). 2 stretches are compositionally biased toward polar residues: residues 645 to 660 (SFSV…SRTS) and 688 to 698 (RASTSSPTIPQ). Residues 645-763 (SFSVNSCQQS…SPMAPAKNDL (119 aa)) are disordered. The span at 708 to 729 (PAPPPVASVMRMPPPVTPPKPC) shows a compositional bias: pro residues.

This sequence belongs to the MRL family. As to quaternary structure, may interact (via Ras-associating and PH domains) with ced-10 (GTP-bound form).

It is found in the perikaryon. In terms of biological role, required cell non-autonomously for proper development of the excretory canals and for the long-range anterior-posterior migrations of embryonic neurons CAN, ALM and HSN. Plays a role, probably downstream of ced-10/rac1, in orientating axonal growth of HSN and AVM neurons in response to guidance cues such as slt-1. May regulate growth cone polarization by promoting asymmetric F-actin assembly. May be involved in signal transduction during cell migration. This Caenorhabditis elegans protein is Abnormal cell migration protein 10.